The following is a 505-amino-acid chain: Protein disulfide-isomerase A3 (505 aa).

Residues 1 to 24 form the signal peptide; that stretch reads MSVPRPSRAALLLLVPLLALSAGA. Thioredoxin domains follow at residues 25–131 and 341–483; these read SDVV…KQAG and SRDG…REAT. Active-site nucleophile residues include Cys-55 and Cys-58. 3 cysteine pairs are disulfide-bonded: Cys-55–Cys-58, Cys-83–Cys-90, and Cys-404–Cys-407. Active-site nucleophile residues include Cys-404 and Cys-407. Residues 486–505 form a disordered region; the sequence is PVLQEEDKAKKSKKKAKEDL. A compositionally biased stretch (basic residues) spans 495-505; that stretch reads KKSKKKAKEDL. Residues 502–505 carry the Prevents secretion from ER motif; that stretch reads KEDL.

It belongs to the protein disulfide isomerase family.

It localises to the endoplasmic reticulum. The protein localises to the endoplasmic reticulum lumen. It is found in the melanosome. The enzyme catalyses Catalyzes the rearrangement of -S-S- bonds in proteins.. Functionally, protein disulfide isomerase that catalyzes the formation, isomerization, and reduction or oxidation of disulfide bonds in client proteins and functions as a protein folding chaperone. In Gallus gallus (Chicken), this protein is Protein disulfide-isomerase A3 (PDIA3).